The primary structure comprises 333 residues: Aquaporin-1 (333 aa).

Positions 1–26 (MQKMSEKPLYRAAENPTRNADRRAGR) are disordered. 2 consecutive transmembrane segments (helical) span residues 85-105 (LAMF…HFTG) and 116-136 (FHGF…GGII). An NPA 1 motif is present at residues 137–139 (NPA). The next 3 helical transmembrane spans lie at 156–176 (LVLV…VYLI), 213–233 (TGAI…FLSI), and 245–265 (LFPF…SYSA). Residues 270–272 (NPA) carry the NPA 2 motif. The helical transmembrane segment at 303–323 (WLFPYVGALFGAVMYQIFVGV) threads the bilayer.

The protein belongs to the MIP/aquaporin (TC 1.A.8) family.

Its subcellular location is the cell membrane. Functionally, aquaglyceroporin that may modulate the water content and osmolytes during anhydrobiosis. This is Aquaporin-1 from Milnesium tardigradum (Water bear).